The sequence spans 1050 residues: Sentrin-specific protease 7 (1050 aa).

Disordered stretches follow at residues 1 to 28, 183 to 288, and 304 to 365; these read MDKR…SSDL, PPVT…DVKY, and RRLR…KSDF. Residues S11, S12, S13, and S25 each carry the phosphoserine modification. Positions 196–211 are enriched in low complexity; the sequence is LQSEQLSSSSDGSLES. Residues 259-271 show a composition bias toward polar residues; that stretch reads ISDTQPEDLNSGS. Residues 273–288 are compositionally biased toward basic and acidic residues; the sequence is GCDHLEQESRNKDVKY. Residues 310 to 320 are compositionally biased toward polar residues; it reads LPDSQYCTSLD. Basic and acidic residues-rich tracts occupy residues 321-331 and 338-365; these read KSTEQTKKQED and EFEK…KSDF. Phosphoserine occurs at positions 373, 433, 443, and 444. The segment at 443–476 is disordered; it reads SSDEEGPVEHKSSEILKLQSKQDRETTNENESTS. The span at 449–469 shows a compositional bias: basic and acidic residues; sequence PVEHKSSEILKLQSKQDRETT. Positions 760 to 1050 are protease; sequence LGVTNEDLEC…HLQQQKGSSS (291 aa). Active-site residues include H860 and D939. C992 (nucleophile) is an active-site residue.

It belongs to the peptidase C48 family.

The protein resides in the cytoplasm. In terms of biological role, protease that acts as a positive regulator of the cGAS-STING pathway by catalyzing desumoylation of CGAS. Desumoylation of CGAS promotes DNA-binding activity of CGAS, subsequent oligomerization and activation. Deconjugates SUMO2 and SUMO3 from targeted proteins, but not SUMO1. Catalyzes the deconjugation of poly-SUMO2 and poly-SUMO3 chains. Has very low efficiency in processing full-length SUMO proteins to their mature forms. The chain is Sentrin-specific protease 7 from Homo sapiens (Human).